Consider the following 295-residue polypeptide: Protease HtpX (295 aa).

The next 2 helical transmembrane spans lie at 4–24 (ILLF…TLSL) and 41–61 (SSLL…SLFI). His-147 contributes to the Zn(2+) binding site. Glu-148 is an active-site residue. Zn(2+) is bound at residue His-151. 2 helical membrane passes run 158-178 (VTLA…ARII) and 199-219 (VATI…VMWF). Residue Glu-224 participates in Zn(2+) binding.

The protein belongs to the peptidase M48B family. It depends on Zn(2+) as a cofactor.

Its subcellular location is the cell inner membrane. This chain is Protease HtpX, found in Pseudomonas putida (strain ATCC 700007 / DSM 6899 / JCM 31910 / BCRC 17059 / LMG 24140 / F1).